The following is a 361-amino-acid chain: Hsc70-interacting protein (361 aa).

Residues 39 to 98 are disordered; that stretch reads GGTIPPAPASTSTDETSKGKAEEQPEEPVKSPEPESEESDLEIDNEGVIEPDNDDPQEMG. The segment covering 53–71 has biased composition (basic and acidic residues); sequence ETSKGKAEEQPEEPVKSPE. Residues 72 to 98 are compositionally biased toward acidic residues; sequence PESEESDLEIDNEGVIEPDNDDPQEMG. TPR repeat units follow at residues 112–145, 147–179, and 181–213; these read ANEK…NPCL, ILYA…NPDS, and QTYK…DYDE. Basic and acidic residues predominate over residues 254-270; that stretch reads KAREEHERAQREEEARR. Residues 254–292 are disordered; the sequence is KAREEHERAQREEEARRQAGGAQFGGFPGGFPGGFPGAM. The segment covering 275 to 292 has biased composition (gly residues); sequence AQFGGFPGGFPGGFPGAM. Residues 311–350 enclose the STI1 domain; the sequence is DPEVLAAMQDPEVMAAFQDVAQNPANMSKYQNNPKVMSLI.

Belongs to the FAM10 family. In terms of assembly, homotetramer. Interacts with HSC70 as well as DNAJ homologs and HSP90.

The protein resides in the cytoplasm. Its function is as follows. One HIP oligomer binds the ATPase domains of at least two HSC70 molecules dependent on activation of the HSC70 ATPase by HSP40. Stabilizes the ADP state of HSC70 that has a high affinity for substrate protein. Through its own chaperone activity, it may contribute to the interaction of HSC70 with various target proteins. The polypeptide is Hsc70-interacting protein (ST13) (Gallus gallus (Chicken)).